We begin with the raw amino-acid sequence, 546 residues long: MAKQVIFNEQARAALKHGVDTLALAVKTTLGPRGRNVAMGKKWGAPSVTHDGVTVAKEVELKDPFQNMGAQLLKEAASKTNDVAGDGTTTATVLAQAMIDEGLKLVAAGANPMIFKRGLDKGREALVARIKEQSITLKSRDEIRQVATISAQDPEIGELLATIMDKIGHDGVVTIEEGKGTTLEYELVEGMQFDRGYISPYFVTDSSRMEAVIDEPYILITDKKISAVNDLLPILEAVLATGKKDLVIIAEDVDGEALATLVVNKMRGTLNALAVKAPGFGDRRKAMLQDIAILTGGTVISEEVGRKLDSAKVQDLGRARRVKSDKDNTVIVEGFGDKQAIQARIRQLKQQIETTTSDYDREKLQERVAKLSGGVAVIKVGAPTEPALKERKARVEDALNATRAAVEEGIVPGGGIALLNAIPALDNVQTQFEEERMALNILRRALEEPLRQLAINAGEDGSVVVNQVRTLQREHNNPNYGFDVMTGKYVDLMQAGIIDPAKVVRTALENAVSVAGIVLTTDALITDAPEPKKNGARTPSMPEEEF.

ATP-binding positions include 29–32 (TLGP), 86–90 (DGTTT), Gly-414, and Asp-499.

It belongs to the chaperonin (HSP60) family. As to quaternary structure, forms a cylinder of 14 subunits composed of two heptameric rings stacked back-to-back. Interacts with the co-chaperonin GroES.

Its subcellular location is the cytoplasm. The catalysed reaction is ATP + H2O + a folded polypeptide = ADP + phosphate + an unfolded polypeptide.. In terms of biological role, together with its co-chaperonin GroES, plays an essential role in assisting protein folding. The GroEL-GroES system forms a nano-cage that allows encapsulation of the non-native substrate proteins and provides a physical environment optimized to promote and accelerate protein folding. This is Chaperonin GroEL 1 from Roseiflexus sp. (strain RS-1).